Reading from the N-terminus, the 301-residue chain is MSHTAEIPLVPGSESPLELKPLKAADPHVVYHRRAHRLLSLAKDSPLADYFELCRRLVSIQAKLAEEADFGQLLAWGKDEATPLSLLGSEADSYWQGLLQQLLSDLLPQVDESIARVVRLLMQQSPEQLSSWGRSLRQGHVSEVPAHFSLFIWAAMGVYWSHWAPMVIKRMDQRKVAQQSMCPVCGCHPVASVIVDQPRAGLRYLHCSLCESEWHYIRAHCTSCGQDKEMTIWSLDDAQAQVRIESCDECHGYTKMMFVEMSPSMDVVADDLATLMLDSELNAKGFGATTLNPLLMAHEIT.

The protein belongs to the FdhE family.

It localises to the cytoplasm. Necessary for formate dehydrogenase activity. In Shewanella baltica (strain OS223), this protein is Protein FdhE homolog.